The sequence spans 360 residues: Peptide chain release factor 1 (360 aa).

The residue at position 235 (Gln235) is an N5-methylglutamine.

This sequence belongs to the prokaryotic/mitochondrial release factor family. In terms of processing, methylated by PrmC. Methylation increases the termination efficiency of RF1.

It is found in the cytoplasm. In terms of biological role, peptide chain release factor 1 directs the termination of translation in response to the peptide chain termination codons UAG and UAA. The sequence is that of Peptide chain release factor 1 from Methylobacillus flagellatus (strain ATCC 51484 / DSM 6875 / VKM B-1610 / KT).